The sequence spans 318 residues: L-lactate dehydrogenase (318 aa).

3 residues coordinate NAD(+): valine 15, aspartate 36, and lysine 41. Substrate is bound at residue arginine 89. Residues serine 102, 119 to 121, and threonine 144 contribute to the NAD(+) site; that span reads ITN. Position 121 to 124 (121 to 124) interacts with substrate; that stretch reads NPVD. Substrate is bound at residue 149 to 152; it reads DSAR. Residue histidine 176 is the Proton acceptor of the active site. Position 231 (threonine 231) interacts with substrate.

It belongs to the LDH/MDH superfamily. LDH family. In terms of assembly, homotetramer.

It is found in the cytoplasm. The catalysed reaction is (S)-lactate + NAD(+) = pyruvate + NADH + H(+). The protein operates within fermentation; pyruvate fermentation to lactate; (S)-lactate from pyruvate: step 1/1. Functionally, catalyzes the conversion of lactate to pyruvate. This Fusobacterium nucleatum subsp. nucleatum (strain ATCC 25586 / DSM 15643 / BCRC 10681 / CIP 101130 / JCM 8532 / KCTC 2640 / LMG 13131 / VPI 4355) protein is L-lactate dehydrogenase.